A 160-amino-acid polypeptide reads, in one-letter code: Nucleotide-binding protein Bpet3698 (160 aa).

The protein belongs to the YajQ family.

In terms of biological role, nucleotide-binding protein. The chain is Nucleotide-binding protein Bpet3698 from Bordetella petrii (strain ATCC BAA-461 / DSM 12804 / CCUG 43448).